An 89-amino-acid polypeptide reads, in one-letter code: Co-chaperonin GroES (89 aa).

Belongs to the GroES chaperonin family. In terms of assembly, heptamer of 7 subunits arranged in a ring. Interacts with the chaperonin GroEL.

Its subcellular location is the cytoplasm. Functionally, together with the chaperonin GroEL, plays an essential role in assisting protein folding. The GroEL-GroES system forms a nano-cage that allows encapsulation of the non-native substrate proteins and provides a physical environment optimized to promote and accelerate protein folding. GroES binds to the apical surface of the GroEL ring, thereby capping the opening of the GroEL channel. This is Co-chaperonin GroES from Kosmotoga olearia (strain ATCC BAA-1733 / DSM 21960 / TBF 19.5.1).